Consider the following 349-residue polypeptide: UDP-3-O-acylglucosamine N-acyltransferase (349 aa).

The Proton acceptor role is filled by His242.

The protein belongs to the transferase hexapeptide repeat family. LpxD subfamily. As to quaternary structure, homotrimer.

The enzyme catalyses a UDP-3-O-[(3R)-3-hydroxyacyl]-alpha-D-glucosamine + a (3R)-hydroxyacyl-[ACP] = a UDP-2-N,3-O-bis[(3R)-3-hydroxyacyl]-alpha-D-glucosamine + holo-[ACP] + H(+). It functions in the pathway bacterial outer membrane biogenesis; LPS lipid A biosynthesis. Its function is as follows. Catalyzes the N-acylation of UDP-3-O-acylglucosamine using 3-hydroxyacyl-ACP as the acyl donor. Is involved in the biosynthesis of lipid A, a phosphorylated glycolipid that anchors the lipopolysaccharide to the outer membrane of the cell. The sequence is that of UDP-3-O-acylglucosamine N-acyltransferase from Cytophaga hutchinsonii (strain ATCC 33406 / DSM 1761 / CIP 103989 / NBRC 15051 / NCIMB 9469 / D465).